The sequence spans 349 residues: UPF0324 inner membrane protein YeiH (349 aa).

Residues 1 to 12 (MTELTLQNHCRT) are Periplasmic-facing. A helical transmembrane segment spans residues 13–35 (MWHFIPGLALSAVITGVALWGGA). At 36 to 38 (IPA) the chain is on the cytoplasmic side. The chain crosses the membrane as a helical span at residues 39–61 (VAGAGFSALTLAILLGMVIGNTI). Residues 62–99 (YPQIWKQCDGGVLFAKQHLLRLGIILYGFRLTFSQIAD) lie on the Periplasmic side of the membrane. Residues 100 to 122 (VGISGIVIDVLTLSSTFMLACFL) traverse the membrane as a helical segment. The Cytoplasmic segment spans residues 123–131 (GQKVFGLDR). The helical transmembrane segment at 132-151 (HTSWLIGAGSSICGAAAVLA) threads the bilayer. At 152-162 (TEPVVKAEASK) the chain is on the periplasmic side. The helical transmembrane segment at 163-185 (VTVAVATVVIFGTIAIFLYPAMY) threads the bilayer. Over 186 to 261 (PLLAHWFSPE…SPATGAEKSK (76 aa)) the chain is Cytoplasmic. The helical transmembrane segment at 262–284 (ITIPWFAIFFIVVAIFNSFHLLP) threads the bilayer. The Periplasmic segment spans residues 285 to 290 (KAVVDM). Residues 291–313 (LVTLDTVLLAMAMAALGLTTHVS) form a helical membrane-spanning segment. Residues 314–322 (ALKKAGAKP) lie on the Cytoplasmic side of the membrane. The chain crosses the membrane as a helical span at residues 323–345 (LLMALALFAWLIIGGGAINVLIH). Over 346 to 349 (SLIA) the chain is Periplasmic.

This sequence belongs to the UPF0324 family.

The protein resides in the cell inner membrane. The polypeptide is UPF0324 inner membrane protein YeiH (yeiH) (Salmonella typhimurium (strain LT2 / SGSC1412 / ATCC 700720)).